A 926-amino-acid chain; its full sequence is DNA mismatch repair protein MutS (926 aa).

A disordered region spans residues valine 16–serine 40. Residues proline 26 to serine 40 are compositionally biased toward low complexity. Glycine 658–serine 665 contacts ATP.

It belongs to the DNA mismatch repair MutS family.

This protein is involved in the repair of mismatches in DNA. It is possible that it carries out the mismatch recognition step. This protein has a weak ATPase activity. This Granulibacter bethesdensis (strain ATCC BAA-1260 / CGDNIH1) protein is DNA mismatch repair protein MutS.